The primary structure comprises 444 residues: N-succinylarginine dihydrolase (444 aa).

Substrate contacts are provided by residues 19–28 (AGLSFGNVAS), Asn110, and 137–138 (HR). Glu174 is a catalytic residue. Arg214 contributes to the substrate binding site. The active site involves His250. Asp252 and Asn362 together coordinate substrate. Residue Cys368 is the Nucleophile of the active site.

This sequence belongs to the succinylarginine dihydrolase family. In terms of assembly, homodimer.

The enzyme catalyses N(2)-succinyl-L-arginine + 2 H2O + 2 H(+) = N(2)-succinyl-L-ornithine + 2 NH4(+) + CO2. It participates in amino-acid degradation; L-arginine degradation via AST pathway; L-glutamate and succinate from L-arginine: step 2/5. In terms of biological role, catalyzes the hydrolysis of N(2)-succinylarginine into N(2)-succinylornithine, ammonia and CO(2). This is N-succinylarginine dihydrolase from Shewanella sp. (strain ANA-3).